A 209-amino-acid chain; its full sequence is Outer-membrane lipoprotein LolB (209 aa).

A signal peptide spans 1-17 (MKKSTLLFSLMAMALSG). Cys18 carries the N-palmitoyl cysteine lipid modification. Cys18 is lipidated: S-diacylglycerol cysteine.

It belongs to the LolB family. In terms of assembly, monomer.

It is found in the cell outer membrane. Plays a critical role in the incorporation of lipoproteins in the outer membrane after they are released by the LolA protein. The protein is Outer-membrane lipoprotein LolB of Haemophilus ducreyi (strain 35000HP / ATCC 700724).